The following is a 216-amino-acid chain: 3-keto-L-gulonate-6-phosphate decarboxylase UlaD (216 aa).

Substrate is bound at residue Asp11. Mg(2+) is bound by residues Glu33 and Asp62. Residue Arg192 coordinates substrate.

This sequence belongs to the HPS/KGPDC family. KGPDC subfamily. As to quaternary structure, homodimer. The cofactor is Mg(2+).

It carries out the reaction 3-dehydro-L-gulonate 6-phosphate + H(+) = L-xylulose 5-phosphate + CO2. It participates in cofactor degradation; L-ascorbate degradation; D-xylulose 5-phosphate from L-ascorbate: step 2/4. Functionally, catalyzes the decarboxylation of 3-keto-L-gulonate-6-P into L-xylulose-5-P. Is involved in the anaerobic L-ascorbate utilization. The sequence is that of 3-keto-L-gulonate-6-phosphate decarboxylase UlaD from Shigella dysenteriae serotype 1 (strain Sd197).